We begin with the raw amino-acid sequence, 328 residues long: MCSTFILPPRRNNCNKSSSTIAYSKSQHEAPKQLLQLRSEIKPLIPLNQPSNFWESSQDSGVLSSLSSSPQQRSGLRSQKLHLTYIEKNKRVRAMIPQQQHYHAFDRPTHYNSRKTSGPPPLMRTPSSGFSSASSSENMFSGLTLSDNENKIHEIMDPSVDVDLDMFLLPDCRYKQPVQPSTSTSRNNVSQISGSSRLNGSTRHVAPIVPKVAMPSELSYANVKRSSGYVDYMPTTYNSNVTSNSSAASVPMSPGTWVRCHYCWESYVKLCQRVANLEPLISCDGPWNWHTLYDMQGRVTCPRLWFAQLDRAGSEMVEQMGHARNVPV.

Disordered stretches follow at residues Ser56–Ser78, Pro108–Ser135, and Pro177–Gly200. A compositionally biased stretch (polar residues) spans Val178–Gly200.

As to quaternary structure, interacts with fbf-2; the interaction probably mediates the release of the C-terminal tail of fbf-2 from the RNA-binding domain, thereby altering its RNA-binding affinity.

Its function is as follows. Plays a role in germline stem cell maintenance, perhaps acting in concert with mRNA-binding factor fbf-2. May regulate fbf-2 by modulating RNA-binding and perhaps by competition with the intramolecular interaction between the fbf-2 RNA-binding domain and C-terminal tail. This Caenorhabditis elegans protein is Lateral signaling target 1 protein.